Consider the following 474-residue polypeptide: Transcription factor SOX-4 (474 aa).

Residues 1-10 are compositionally biased toward polar residues; that stretch reads MVQQTNNAEN. The disordered stretch occupies residues 1 to 58; the sequence is MVQQTNNAENTEALLAGESSDSGAGLELGIASSPTPGSTASTGGKADDPSWCKTPSGH. Residues 31 to 44 show a composition bias toward low complexity; the sequence is ASSPTPGSTASTGG. The HMG box DNA-binding region spans 59-127; it reads IKRPMNAFMV…KHMADYPDYK (69 aa). Lysine 95 is subject to N6-acetyllysine. Disordered stretches follow at residues 128-228, 262-286, and 302-416; these read YRPR…GGGK, ARTPSASASASSAASASAALAAPGK, and LGTS…NFES. Positions 138–149 are enriched in low complexity; it reads NANSSSSAAASS. A compositionally biased stretch (gly residues) spans 158-189; sequence VGGSGGGGHGGGGGGGSSNAGGGGGGASGGGA. Low complexity-rich tracts occupy residues 266–283, 304–320, 336–354, and 366–396; these read SASASASSAASASAALAA, TSSSPVGGVGAGADPSD, APSLSGRSSAASSPAAGRS, and AASPAPSSAPSHASSSASSHSSSSSSSGSSS. The span at 397-406 shows a compositional bias: acidic residues; the sequence is SDDEFEDDLL. Positions 407–416 are enriched in low complexity; sequence DLNPSSNFES. Positions 426–434 match the 9aaTAD motif; it reads SALDRDLDF.

Interacts with UBE2I. Interacts with HDAC1; interaction inhibits the transcriptional activator activity. Post-translationally, acetylation at Lys-95 by KAT5 promotes the transcription activator activity and is required during myoblast differentiation. Acetylation by KAT5 abolishes the interaction between SOX4 and HDAC1 and switches SOX4 into a transcriptional activator. As to expression, testis, brain, and heart.

The protein resides in the nucleus. Its function is as follows. Transcriptional activator that binds with high affinity to the T-cell enhancer motif 5'-AACAAAG-3' motif. Required for IL17A-producing Vgamma2-positive gamma-delta T-cell maturation and development, via binding to regulator loci of RORC to modulate expression. Involved in skeletal myoblast differentiation by promoting gene expression of CALD1. This Homo sapiens (Human) protein is Transcription factor SOX-4.